The sequence spans 104 residues: Large ribosomal subunit protein uL24 (104 aa).

The protein belongs to the universal ribosomal protein uL24 family. In terms of assembly, part of the 50S ribosomal subunit.

In terms of biological role, one of two assembly initiator proteins, it binds directly to the 5'-end of the 23S rRNA, where it nucleates assembly of the 50S subunit. Its function is as follows. One of the proteins that surrounds the polypeptide exit tunnel on the outside of the subunit. This chain is Large ribosomal subunit protein uL24, found in Shewanella baltica (strain OS223).